A 605-amino-acid chain; its full sequence is Protein Spindly (605 aa).

N-acetylmethionine is present on M1. The stretch at 3-442 (TDIVINLRCK…ELKLKYEPEE (440 aa)) forms a coiled coil. Phosphoserine is present on residues S513, S515, and S555. A disordered region spans residues 545 to 581 (LSERSGNTLNSPRLAAESKLQTEVKEGKETASKLEKE). Basic and acidic residues predominate over residues 564–581 (LQTEVKEGKETASKLEKE).

Belongs to the Spindly family. As to quaternary structure, interacts with KNTC1 and ZW10. These interactions appear weak and may be transient or indirect. Interacts with dynein intermediate chain and dynactin (DCTN1). Interacts with the catalytically active form of USP45. In terms of processing, monoubiquitinated with'Lys-48' linkage. Deubiquitinated by USP45.

It is found in the cytoplasm. It localises to the cytoskeleton. The protein localises to the microtubule organizing center. Its subcellular location is the centrosome. The protein resides in the chromosome. It is found in the centromere. It localises to the kinetochore. The protein localises to the nucleus. Its subcellular location is the spindle pole. Its function is as follows. Required for the localization of dynein and dynactin to the mitotic kintochore. Dynein is believed to control the initial lateral interaction between the kinetochore and spindle microtubules and to facilitate the subsequent formation of end-on kinetochore-microtubule attachments mediated by the NDC80 complex. Also required for correct spindle orientation. Does not appear to be required for the removal of spindle assembly checkpoint (SAC) proteins from the kinetochore upon bipolar spindle attachment. Acts as an adapter protein linking the dynein motor complex to various cargos and converts dynein from a non-processive to a highly processive motor in the presence of dynactin. Facilitates the interaction between dynein and dynactin and activates dynein processivity (the ability to move along a microtubule for a long distance without falling off the track). Plays a role in cell migration. The chain is Protein Spindly from Macaca fascicularis (Crab-eating macaque).